The following is a 103-amino-acid chain: Histone H4 (103 aa).

Over residues 1–14 (MSGRGKGGKGLGKG) the composition is skewed to gly residues. The segment at 1-20 (MSGRGKGGKGLGKGGAKRHR) is disordered. The DNA-binding element occupies 17–21 (KRHRK).

The protein belongs to the histone H4 family. The nucleosome is a histone octamer containing two molecules each of H2A, H2B, H3 and H4 assembled in one H3-H4 heterotetramer and two H2A-H2B heterodimers. The octamer wraps approximately 147 bp of DNA.

Its subcellular location is the nucleus. It is found in the chromosome. Core component of nucleosome. Nucleosomes wrap and compact DNA into chromatin, limiting DNA accessibility to the cellular machineries which require DNA as a template. Histones thereby play a central role in transcription regulation, DNA repair, DNA replication and chromosomal stability. DNA accessibility is regulated via a complex set of post-translational modifications of histones, also called histone code, and nucleosome remodeling. The protein is Histone H4 (H4-I) of Chlamydomonas reinhardtii (Chlamydomonas smithii).